Consider the following 144-residue polypeptide: Large ribosomal subunit protein uL15 (144 aa).

The tract at residues 1–52 (MRLNTLSPANGARHSRKRLGRGIGSGFGKTSGRGHKGQKSRSGSSIRRGFEG) is disordered. A compositionally biased stretch (gly residues) spans 21–31 (RGIGSGFGKTS).

The protein belongs to the universal ribosomal protein uL15 family. Part of the 50S ribosomal subunit.

Binds to the 23S rRNA. In Buchnera aphidicola subsp. Acyrthosiphon pisum (strain 5A), this protein is Large ribosomal subunit protein uL15.